We begin with the raw amino-acid sequence, 285 residues long: Bifunctional protein FolD (285 aa).

Residues 163–165 (GRS) and Ser188 contribute to the NADP(+) site.

It belongs to the tetrahydrofolate dehydrogenase/cyclohydrolase family. In terms of assembly, homodimer.

The enzyme catalyses (6R)-5,10-methylene-5,6,7,8-tetrahydrofolate + NADP(+) = (6R)-5,10-methenyltetrahydrofolate + NADPH. It catalyses the reaction (6R)-5,10-methenyltetrahydrofolate + H2O = (6R)-10-formyltetrahydrofolate + H(+). Its pathway is one-carbon metabolism; tetrahydrofolate interconversion. Catalyzes the oxidation of 5,10-methylenetetrahydrofolate to 5,10-methenyltetrahydrofolate and then the hydrolysis of 5,10-methenyltetrahydrofolate to 10-formyltetrahydrofolate. The sequence is that of Bifunctional protein FolD from Lactococcus lactis subsp. cremoris (strain MG1363).